Consider the following 610-residue polypeptide: UvrABC system protein C (610 aa).

One can recognise a GIY-YIG domain in the interval 19 to 97; the sequence is GAPGVYKMLD…IKRHKPRYNI (79 aa). The UVR domain maps to 207–242; the sequence is EALIDRLAQRMEQAAQRLEFEKAARYRDQISNLRTV.

The protein belongs to the UvrC family. Interacts with UvrB in an incision complex.

Its subcellular location is the cytoplasm. The UvrABC repair system catalyzes the recognition and processing of DNA lesions. UvrC both incises the 5' and 3' sides of the lesion. The N-terminal half is responsible for the 3' incision and the C-terminal half is responsible for the 5' incision. The chain is UvrABC system protein C from Methylococcus capsulatus (strain ATCC 33009 / NCIMB 11132 / Bath).